Reading from the N-terminus, the 464-residue chain is Potassium/proton antiporter CemA (464 aa).

Helical transmembrane passes span 36-56 (FSLS…TEIL), 241-261 (ASVS…QIAI), 341-361 (LLLR…LLIF), 389-409 (ILLL…EILV), and 425-445 (TPCF…YWIF).

Belongs to the CemA family.

It localises to the plastid. Its subcellular location is the chloroplast inner membrane. The enzyme catalyses K(+)(in) + H(+)(out) = K(+)(out) + H(+)(in). Functionally, contributes to K(+)/H(+) antiport activity by supporting proton efflux to control proton extrusion and homeostasis in chloroplasts in a light-dependent manner to modulate photosynthesis. Prevents excessive induction of non-photochemical quenching (NPQ) under continuous-light conditions. Indirectly promotes efficient inorganic carbon uptake into chloroplasts. The chain is Potassium/proton antiporter CemA from Adiantum capillus-veneris (Maidenhair fern).